The sequence spans 1265 residues: Kinesin-related protein 13 (1265 aa).

Residues 23–350 (NIQAFVRVRP…LEYALKAKNI (328 aa)) form the Kinesin motor domain. ATP is bound at residue 106–113 (GQTGTGKT). Positions 331–459 (LVNLEETINT…KQQQEKQKFI (129 aa)) form a coiled coil. 5 disordered regions span residues 918–1026 (KSGE…QPLI), 1085–1119 (SLVN…LSQL), 1127–1146 (LQPQ…LNGS), 1158–1214 (LLDD…NQSL), and 1245–1265 (FGGG…TPLK). Over residues 930–951 (IPSPISTSSSSSSSSSISSIHS) the composition is skewed to low complexity. 3 stretches are compositionally biased toward polar residues: residues 960–980 (HQSI…SINC), 1003–1026 (LNLN…QPLI), and 1085–1097 (SLVN…SPKL). Low complexity-rich tracts occupy residues 1100–1119 (QKIL…LSQL) and 1128–1146 (QPQQ…LNGS). Over residues 1158 to 1169 (LLDDDSDSDNSD) the composition is skewed to acidic residues. Residues 1174–1195 (SLLSSNKKSSRASKNAVVSKKV) are compositionally biased toward low complexity. Polar residues predominate over residues 1250 to 1265 (TISSKLKSLKQQTPLK).

Belongs to the TRAFAC class myosin-kinesin ATPase superfamily. Kinesin family. BimC subfamily.

It is found in the cytoplasm. The protein resides in the cytoskeleton. In terms of biological role, microtubule-associated force-producing protein that plays a role in organelle transport. Its motor activity is directed toward the microtubule's plus end. Cooperates with dynein to control the spindle elongation rate, but is dispensable for mitosis. The protein is Kinesin-related protein 13 (kif13) of Dictyostelium discoideum (Social amoeba).